The following is a 378-amino-acid chain: Cytochrome b (378 aa).

A run of 4 helical transmembrane segments spans residues 34–54 (FGSL…FLAM), 78–99 (WFLR…FIHV), 114–134 (WNTG…GYVL), and 179–199 (FFTF…IHLL). Residues H84 and H98 each coordinate heme b. H183 and H197 together coordinate heme b. Residue H202 coordinates a ubiquinone. A run of 4 helical transmembrane segments spans residues 227–247 (YKDI…IWKF), 289–309 (LGGV…PFTH), 321–341 (LNQI…WIGA), and 348–368 (YILT…INPL).

The protein belongs to the cytochrome b family. In terms of assembly, the main subunits of complex b-c1 are: cytochrome b, cytochrome c1 and the Rieske protein. Heme b is required as a cofactor.

It is found in the mitochondrion inner membrane. Component of the ubiquinol-cytochrome c reductase complex (complex III or cytochrome b-c1 complex) that is part of the mitochondrial respiratory chain. The b-c1 complex mediates electron transfer from ubiquinol to cytochrome c. Contributes to the generation of a proton gradient across the mitochondrial membrane that is then used for ATP synthesis. The sequence is that of Cytochrome b (mt:Cyt-b) from Anopheles gambiae (African malaria mosquito).